The primary structure comprises 205 residues: Holliday junction branch migration complex subunit RuvA (205 aa).

The tract at residues 1-64 (MIGRLRGIIL…EDAQLLFGFI (64 aa)) is domain I. A domain II region spans residues 65–143 (HKQERVLFRE…GLSGDLFVPQ (79 aa)). Residues 144 to 156 (GAGEIPAAIDAPA) form a flexible linker region. The segment at 157–205 (MPADPEGEAVAALVALGYKPQEASRMVSKVASAGSDCEMLIRDALRAAL) is domain III.

Belongs to the RuvA family. Homotetramer. Forms an RuvA(8)-RuvB(12)-Holliday junction (HJ) complex. HJ DNA is sandwiched between 2 RuvA tetramers; dsDNA enters through RuvA and exits via RuvB. An RuvB hexamer assembles on each DNA strand where it exits the tetramer. Each RuvB hexamer is contacted by two RuvA subunits (via domain III) on 2 adjacent RuvB subunits; this complex drives branch migration. In the full resolvosome a probable DNA-RuvA(4)-RuvB(12)-RuvC(2) complex forms which resolves the HJ.

The protein resides in the cytoplasm. Functionally, the RuvA-RuvB-RuvC complex processes Holliday junction (HJ) DNA during genetic recombination and DNA repair, while the RuvA-RuvB complex plays an important role in the rescue of blocked DNA replication forks via replication fork reversal (RFR). RuvA specifically binds to HJ cruciform DNA, conferring on it an open structure. The RuvB hexamer acts as an ATP-dependent pump, pulling dsDNA into and through the RuvAB complex. HJ branch migration allows RuvC to scan DNA until it finds its consensus sequence, where it cleaves and resolves the cruciform DNA. The chain is Holliday junction branch migration complex subunit RuvA from Sodalis glossinidius (strain morsitans).